Here is a 1018-residue protein sequence, read N- to C-terminus: MNKMPIPEIYVHNDIEENLNKLGWKELEGYEGEAFSNYIIKPILEEQLKIINDHIGEYKDEFIEKAINKLINEPKPEEILDYIKNGILITLDKGRKGQVSNRVKLIDYKNIEKNIFNYAHELKFKGNDNIIPDFTLFINGIPIIIIEAKREFSEKETYEEAINQINRYEREAPKLFNYVQFAIVYGDEKLYIPTYPNEEKEDRFKKPYKWKNEKKEEDIWDLLKRERVLDTIKNFIFFSKDRAGRKTKIIPRYMQYWAVKKAYERITNYLNNKDYKNRGLVWHWQGSGKTFEILYLAELFYNEFKNKDPIVFIMVDRRELETQFNDDIIALQNANFKDCFKKINSVEELKGVLEDIKESENNPNISEKGVYLVMMHKFDKNKLKDFIESFGSIDKKEILILRDEAHRTESGKFATLRNKILKNAIAIGFTGTPVHKKDMSTFKEYAYPQEGEFYLDRFFIEESIKEGFTLPLIWRVVKPEDIKDISEEEIKNIIEKLFVDEEDADKIVVSKKEIAEKIKLSDLLKSESSIKEASKYIAEHILEDTENFKFKAMVVAQDRKSCILFKKYLDEYLKEKIKNYNENWTQVVITYIHNDDVEIENYKKEIEKKYGKNVDELNKKWTEDFINKENPKILIVNKKLLTGFDAPILKTIYIHQFLKDYLLLQASARANRPAKNKKYGLIVDLTGILIENYKKAIENYNLYRDEAINKDILNNLFVETSKIWESFLTKLNEFKELFKLIVGIEFDDFIVNLKKQKNSKEFKKIISKIILSDKFDYFYAKLRELIQLFEAVGAYGEKLNYYETYEWLKIISAGINKQMRPKSYKIPYNQIKKEVIKYLEFDTYADIASTSINPQLLENLKNKDEINVIVADMIYYALDTLQNKKEPIYRMIYDRINELKNAYISKTKKNEYVINELINCLNALKTYEEEEKTLSKSEKAIKNMLFYLKNVENCNIKKLPLTEKTLKNLEDKKLIKPSDFDKIKKFLFVDLKNAIKETEKRRKVSNKIVEEIIKPIFI.

The protein belongs to the HsdR family. The type I restriction/modification system is composed of three polypeptides R, M and S.

The enzyme catalyses Endonucleolytic cleavage of DNA to give random double-stranded fragments with terminal 5'-phosphates, ATP is simultaneously hydrolyzed.. In terms of biological role, the restriction (R) subunit of a type I restriction enzyme that recognizes 5'-GAYN(5)GTAA-3' and cleaves a random distance away. The R subunit is required for both endonuclease and ATPase activities but not for modification. After locating a non-methylated recognition site, the enzyme complex serves as a molecular motor that translocates DNA in an ATP-dependent manner until a collision occurs that triggers cleavage. This chain is Putative type I restriction enzyme MjaVIIIP endonuclease subunit, found in Methanocaldococcus jannaschii (strain ATCC 43067 / DSM 2661 / JAL-1 / JCM 10045 / NBRC 100440) (Methanococcus jannaschii).